Reading from the N-terminus, the 870-residue chain is Histidine biosynthesis trifunctional protein (870 aa).

Positions 1-285 (METTLPLPFL…KFVVKQKGRF (285 aa)) are phosphoribosyl-AMP cyclohydrolase. The phosphoribosyl-ATP pyrophosphohydrolase stretch occupies residues 286–367 (CHLDQSGCFG…FYFALTRAVA (82 aa)). Residues 368–870 (AGVTLADIER…IRLEHMSKSN (503 aa)) form a histidinol dehydrogenase region. Positions 693 and 696 each coordinate Zn(2+). Residues glutamate 762 and histidine 763 contribute to the active site. Aspartate 796 and histidine 855 together coordinate Zn(2+).

This sequence in the C-terminal section; belongs to the histidinol dehydrogenase family. Requires Zn(2+) as cofactor.

It carries out the reaction 1-(5-phospho-beta-D-ribosyl)-5'-AMP + H2O = 1-(5-phospho-beta-D-ribosyl)-5-[(5-phospho-beta-D-ribosylamino)methylideneamino]imidazole-4-carboxamide. It catalyses the reaction 1-(5-phospho-beta-D-ribosyl)-ATP + H2O = 1-(5-phospho-beta-D-ribosyl)-5'-AMP + diphosphate + H(+). The enzyme catalyses L-histidinol + 2 NAD(+) + H2O = L-histidine + 2 NADH + 3 H(+). It functions in the pathway amino-acid biosynthesis; L-histidine biosynthesis; L-histidine from 5-phospho-alpha-D-ribose 1-diphosphate: step 2/9. Its pathway is amino-acid biosynthesis; L-histidine biosynthesis; L-histidine from 5-phospho-alpha-D-ribose 1-diphosphate: step 3/9. The protein operates within amino-acid biosynthesis; L-histidine biosynthesis; L-histidine from 5-phospho-alpha-D-ribose 1-diphosphate: step 9/9. The chain is Histidine biosynthesis trifunctional protein (his-3) from Neurospora crassa (strain ATCC 24698 / 74-OR23-1A / CBS 708.71 / DSM 1257 / FGSC 987).